The sequence spans 496 residues: Probable cytosol aminopeptidase (496 aa).

K261 and D266 together coordinate Mn(2+). K273 is a catalytic residue. Mn(2+)-binding residues include D284, D343, and E345. R347 is a catalytic residue.

This sequence belongs to the peptidase M17 family. Mn(2+) is required as a cofactor.

The protein localises to the cytoplasm. It catalyses the reaction Release of an N-terminal amino acid, Xaa-|-Yaa-, in which Xaa is preferably Leu, but may be other amino acids including Pro although not Arg or Lys, and Yaa may be Pro. Amino acid amides and methyl esters are also readily hydrolyzed, but rates on arylamides are exceedingly low.. It carries out the reaction Release of an N-terminal amino acid, preferentially leucine, but not glutamic or aspartic acids.. Presumably involved in the processing and regular turnover of intracellular proteins. Catalyzes the removal of unsubstituted N-terminal amino acids from various peptides. The polypeptide is Probable cytosol aminopeptidase (Bacillus licheniformis (strain ATCC 14580 / DSM 13 / JCM 2505 / CCUG 7422 / NBRC 12200 / NCIMB 9375 / NCTC 10341 / NRRL NRS-1264 / Gibson 46)).